The following is a 150-amino-acid chain: uncharacterized protein (150 aa).

The 146-residue stretch at 4 to 149 folds into the N-acetyltransferase domain; sequence IQIRNYQPGD…TNFYMRYKPQ (146 aa).

The protein belongs to the acetyltransferase family.

This is an uncharacterized protein from Escherichia coli (strain K12).